Here is a 280-residue protein sequence, read N- to C-terminus: Chemotaxis protein methyltransferase 2 (280 aa).

Positions 10-280 (FGNQEFHYTR…SVGQTVYSPA (271 aa)) constitute a CheR-type methyltransferase domain. Residues asparagine 85, threonine 87, arginine 91, glutamate 125, aspartate 150, 208 to 209 (NL), and 226 to 227 (RN) each bind S-adenosyl-L-methionine.

As to quaternary structure, interacts with the C-terminal pentapeptide GWEEF of the methyl-accepting chemotaxis protein McpB.

The catalysed reaction is L-glutamyl-[protein] + S-adenosyl-L-methionine = [protein]-L-glutamate 5-O-methyl ester + S-adenosyl-L-homocysteine. Its function is as follows. Methylation of the methyl-accepting chemotaxis proteins (MCP) to form gamma-glutamyl methyl ester residues in MCP. It specifically targets the McpB chemoreceptor. This Pseudomonas aeruginosa (strain ATCC 15692 / DSM 22644 / CIP 104116 / JCM 14847 / LMG 12228 / 1C / PRS 101 / PAO1) protein is Chemotaxis protein methyltransferase 2.